A 333-amino-acid polypeptide reads, in one-letter code: L-lactate dehydrogenase B chain (333 aa).

NAD(+) is bound by residues 29-57 (GQVGMACAISILGKGLCDELALVDVWEDK) and arginine 99. Residues arginine 106, asparagine 138, and arginine 169 each coordinate substrate. Asparagine 138 lines the NAD(+) pocket. The active-site Proton acceptor is histidine 193. A substrate-binding site is contributed by threonine 248.

This sequence belongs to the LDH/MDH superfamily. LDH family. As to quaternary structure, homotetramer.

It localises to the cytoplasm. The enzyme catalyses (S)-lactate + NAD(+) = pyruvate + NADH + H(+). The protein operates within fermentation; pyruvate fermentation to lactate; (S)-lactate from pyruvate: step 1/1. Its function is as follows. Interconverts simultaneously and stereospecifically pyruvate and lactate with concomitant interconversion of NADH and NAD(+). This chain is L-lactate dehydrogenase B chain (LDHB), found in Trachemys scripta elegans (Red-eared slider turtle).